The primary structure comprises 576 residues: Arginine--tRNA ligase (576 aa).

Positions 121–131 match the 'HIGH' region motif; that stretch reads PNLAKEMHVGH.

It belongs to the class-I aminoacyl-tRNA synthetase family. Monomer.

The protein localises to the cytoplasm. The catalysed reaction is tRNA(Arg) + L-arginine + ATP = L-arginyl-tRNA(Arg) + AMP + diphosphate. The polypeptide is Arginine--tRNA ligase (Alteromonas mediterranea (strain DSM 17117 / CIP 110805 / LMG 28347 / Deep ecotype)).